The chain runs to 549 residues: MKRVLTALAATLPFAANAADAISGAVERQPTNWQAIIMFLIFVVFTLGITYWASKRVRSRSDYYTAGGNITGFQNGLAIAGDYMSAASFLGISALVFTSGYDGLIYSLGFLVGWPIILFLIAERLRNLGRYTFADVASYRLKQGPIRILSACGSLVVVALYLIAQMVGAGKLIELLFGLNYHIAVVLVGVLMMMYVLFGGMLATTWVQIIKAVLLLFGASFMAFMVMKHVGFSFNNLFSEAMAVHPKGVDIMKPGGLVKDPISALSLGLGLMFGTAGLPHILMRFFTVSDAREARKSVFYATGFMGYFYILTFIIGFGAIMLVGANPEYKDAAGHLIGGNNMAAVHLANAVGGNLFLGFISAVAFATILAVVAGLTLAGASAVSHDLYANVFKKGATEREELRVSKITVLILGVIAIILGMLFENQNIAFMVGLAFAIAASCNFPIILLSMYWSKLTTRGTMLGGWLGLITAVVLMILGPTIWVQILGHEKAIFPYEYPALFSISVAFLGIWFFSATDNSAEGARERELFRAQFIRSQTGFGVEQGRAH.

Transmembrane regions (helical) follow at residues 33 to 53 (WQAI…TYWA), 77 to 97 (LAIA…ALVF), 103 to 123 (GLIY…LIAE), 148 to 168 (ILSA…QMVG), 183 to 203 (IAVV…GMLA), 206 to 226 (WVQI…AFMV), 262 to 282 (ISAL…PHIL), 303 to 323 (GFMG…IMLV), 355 to 375 (LFLG…VAGL), 404 to 424 (VSKI…MLFE), 428 to 448 (IAFM…PIIL), 464 to 484 (GGWL…TIWV), and 493 to 513 (IFPY…GIWF).

Belongs to the sodium:solute symporter (SSF) (TC 2.A.21) family.

It localises to the cell inner membrane. Transports acetate. The chain is Cation/acetate symporter ActP from Shigella boydii serotype 4 (strain Sb227).